The chain runs to 825 residues: NT-3 growth factor receptor (825 aa).

An N-terminal signal peptide occupies residues Met1 to Ala31. Intrachain disulfides connect Cys32–Cys38 and Cys36–Cys45. Topologically, residues Cys32–Thr429 are extracellular. Asn68, Asn72, and Asn79 each carry an N-linked (GlcNAc...) asparagine glycan. LRR repeat units follow at residues Gly104–Lys125 and His128–Thr149. Residues Asn133 and Asn163 are each glycosylated (N-linked (GlcNAc...) asparagine). The LRRCT domain maps to Asn160–Leu209. 2 disulfides stabilise this stretch: Cys164-Cys189 and Cys166-Cys207. Asn203, Asn218, Asn232, Asn259, Asn267, Asn272, and Asn294 each carry an N-linked (GlcNAc...) asparagine glycan. Ig-like C2-type domains are found at residues Pro210–Thr300 and Ser309–Asn382. Cysteines 231 and 284 form a disulfide. Cys320 and Cys362 are oxidised to a cystine. Residues Asn375 and Asn388 are each glycosylated (N-linked (GlcNAc...) asparagine). A helical transmembrane segment spans residues Phe430 to Ile453. Residues Asn454–Gly825 lie on the Cytoplasmic side of the membrane. The residue at position 493 (Ser493) is a Phosphoserine. Tyr516 carries the post-translational modification Phosphotyrosine; by autocatalysis. Residues Ile538–Gly825 enclose the Protein kinase domain. ATP-binding positions include Leu544–Val552 and Lys572. The Proton acceptor role is filled by Asp679. 3 positions are modified to phosphotyrosine; by autocatalysis: Tyr705, Tyr709, and Tyr710.

It belongs to the protein kinase superfamily. Tyr protein kinase family. Insulin receptor subfamily. Exists in a dynamic equilibrium between monomeric (low affinity) and dimeric (high affinity) structures. Binds SH2B2. Interacts with SQSTM1 and KIDINS220. Interacts with PTPRS. Interacts with MAPK8IP3/JIP3. Ligand-mediated auto-phosphorylation.

It localises to the membrane. It catalyses the reaction L-tyrosyl-[protein] + ATP = O-phospho-L-tyrosyl-[protein] + ADP + H(+). Receptor tyrosine kinase involved in nervous system and probably heart development. Upon binding of its ligand NTF3/neurotrophin-3, NTRK3 autophosphorylates and activates different signaling pathways, including the phosphatidylinositol 3-kinase/AKT and the MAPK pathways, that control cell survival and differentiation. This Saimiri boliviensis boliviensis (Bolivian squirrel monkey) protein is NT-3 growth factor receptor (NTRK3).